Here is a 270-residue protein sequence, read N- to C-terminus: MGEQQLDCALDLMRRLPPQHCDKNLTDLIDLCPHLVDDLLSTIDQPLKIAADRETGKQYLLCDYNRDGDSYRSPWSNTYDPPLEDGQLPSEKRRKMEIEANAAFESYRDLYFEGGVSSVYFWDLDNGGFAGIVLIKKEGDGAKNITGCWDSIHVIEITERARQAHYKLTSTIMLWLQTNKSSSGVMNLGGSLTRQHEMDAPINDQNTHLANMGRMIEDQESKMRLTINEIYFGKTKKVMSDLRSTEKQSELEKQDEIVRELNNAMANRGN.

This sequence belongs to the F-actin-capping protein beta subunit family. Component of the F-actin capping complex, composed of a heterodimer of an alpha and a beta subunit.

It localises to the cytoplasm. The protein resides in the cytoskeleton. Its function is as follows. F-actin-capping proteins bind in a Ca(2+)-independent manner to the fast growing ends of actin filaments (barbed end) thereby blocking the exchange of subunits at these ends. Unlike other capping proteins (such as gelsolin and severin), these proteins do not sever actin filaments. This Caenorhabditis elegans protein is F-actin-capping protein subunit beta (cap-2).